Here is a 142-residue protein sequence, read N- to C-terminus: Large ribosomal subunit protein uL11 (142 aa).

The protein belongs to the universal ribosomal protein uL11 family. In terms of assembly, part of the ribosomal stalk of the 50S ribosomal subunit. Interacts with L10 and the large rRNA to form the base of the stalk. L10 forms an elongated spine to which L12 dimers bind in a sequential fashion forming a multimeric L10(L12)X complex. In terms of processing, one or more lysine residues are methylated.

In terms of biological role, forms part of the ribosomal stalk which helps the ribosome interact with GTP-bound translation factors. The chain is Large ribosomal subunit protein uL11 from Pectobacterium carotovorum subsp. carotovorum (strain PC1).